A 729-amino-acid chain; its full sequence is Catalase-peroxidase (729 aa).

The segment at residues 95–217 (WHSAGTYRIT…LAAVQMGLIY (123 aa)) is a cross-link (tryptophyl-tyrosyl-methioninium (Trp-Tyr) (with M-243)). The Proton acceptor role is filled by H96. The segment at residues 217–243 (YVNPEGPNGKPDPIAAATDIRETFFRM) is a cross-link (tryptophyl-tyrosyl-methioninium (Tyr-Met) (with W-95)). H258 is a heme b binding site.

The protein belongs to the peroxidase family. Peroxidase/catalase subfamily. Homodimer or homotetramer. Heme b is required as a cofactor. Post-translationally, formation of the three residue Trp-Tyr-Met cross-link is important for the catalase, but not the peroxidase activity of the enzyme.

The enzyme catalyses H2O2 + AH2 = A + 2 H2O. It carries out the reaction 2 H2O2 = O2 + 2 H2O. Bifunctional enzyme with both catalase and broad-spectrum peroxidase activity. The polypeptide is Catalase-peroxidase (Nitrobacter hamburgensis (strain DSM 10229 / NCIMB 13809 / X14)).